A 359-amino-acid chain; its full sequence is Tropomodulin-1 (359 aa).

The interval 36-61 (ELDPDNALLPAGLRQKDQTTKAPTGP) is disordered. The tract at residues 39–138 (PDNALLPAGL…CDIAAILGMH (100 aa)) is tropomyosin-binding.

Belongs to the tropomodulin family. As to quaternary structure, binds to the N-terminus of tropomyosin and to actin. Interacts with FLII. In terms of tissue distribution, highly expressed in the erythrocyte, heart and skeletal muscle.

Its subcellular location is the cytoplasm. The protein resides in the cytoskeleton. Blocks the elongation and depolymerization of the actin filaments at the pointed end. The Tmod/TM complex contributes to the formation of the short actin protofilament, which in turn defines the geometry of the membrane skeleton. This is Tropomodulin-1 (Tmod1) from Mus musculus (Mouse).